The chain runs to 533 residues: Retinoid isomerohydrolase (533 aa).

Ser-2 bears the N-acetylserine mark. A phosphothreonine mark is found at Thr-101 and Thr-105. A lipid anchor (S-palmitoyl cysteine; in membrane form) is attached at Cys-112. Residue Lys-113 is modified to N6-acetyllysine. Phosphoserine is present on Ser-117. His-180 provides a ligand contact to Fe cation. Cys-231 is lipidated: S-palmitoyl cysteine; in membrane form. His-241 and His-313 together coordinate Fe cation. 2 S-palmitoyl cysteine; in membrane form lipidation sites follow: Cys-329 and Cys-330. Fe cation is bound at residue His-527.

It belongs to the carotenoid oxygenase family. Interacts with MYO7A; this mediates light-dependent intracellular transport of RPE65. Fe(2+) is required as a cofactor. Post-translationally, palmitoylation by LRAT regulates ligand binding specificity; the palmitoylated form (membrane form) specifically binds all-trans-retinyl-palmitate, while the soluble unpalmitoylated form binds all-trans-retinol (vitamin A). In terms of tissue distribution, retinal pigment epithelium specific.

It localises to the cytoplasm. Its subcellular location is the cell membrane. The protein resides in the microsome membrane. It catalyses the reaction an all-trans-retinyl ester + H2O = 11-cis-retinol + a fatty acid + H(+). The catalysed reaction is lutein = (3R,3'S)-zeaxanthin. It carries out the reaction all-trans-retinyl hexadecanoate + H2O = 11-cis-retinol + hexadecanoate + H(+). Functionally, critical isomerohydrolase in the retinoid cycle involved in regeneration of 11-cis-retinal, the chromophore of rod and cone opsins. Catalyzes the cleavage and isomerization of all-trans-retinyl fatty acid esters to 11-cis-retinol which is further oxidized by 11-cis retinol dehydrogenase to 11-cis-retinal for use as visual chromophore. Essential for the production of 11-cis retinal for both rod and cone photoreceptors. Also capable of catalyzing the isomerization of lutein to meso-zeaxanthin an eye-specific carotenoid. The soluble form binds vitamin A (all-trans-retinol), making it available for LRAT processing to all-trans-retinyl ester. The membrane form, palmitoylated by LRAT, binds all-trans-retinyl esters, making them available for IMH (isomerohydrolase) processing to all-cis-retinol. The soluble form is regenerated by transferring its palmitoyl groups onto 11-cis-retinol, a reaction catalyzed by LRAT. This Mus musculus (Mouse) protein is Retinoid isomerohydrolase (Rpe65).